The primary structure comprises 178 residues: Large ribosomal subunit protein uL6 (178 aa).

Belongs to the universal ribosomal protein uL6 family. Part of the 50S ribosomal subunit.

Functionally, this protein binds to the 23S rRNA, and is important in its secondary structure. It is located near the subunit interface in the base of the L7/L12 stalk, and near the tRNA binding site of the peptidyltransferase center. The chain is Large ribosomal subunit protein uL6 from Corynebacterium kroppenstedtii (strain DSM 44385 / JCM 11950 / CIP 105744 / CCUG 35717).